The primary structure comprises 212 residues: Peroxiredoxin 2 (212 aa).

Residues 7–162 (PLIGEKFPEM…ILRSIRALQL (156 aa)) form the Thioredoxin domain. Residue C49 is the Cysteine sulfenic acid (-SOH) intermediate of the active site. Residue R125 coordinates substrate.

The protein belongs to the peroxiredoxin family. Prx6 subfamily. In terms of assembly, homodecamer. Pentamer of dimers that assemble into a ring structure.

It localises to the cytoplasm. The catalysed reaction is a hydroperoxide + [thioredoxin]-dithiol = an alcohol + [thioredoxin]-disulfide + H2O. Functionally, thiol-specific peroxidase that catalyzes the reduction of hydrogen peroxide and organic hydroperoxides to water and alcohols, respectively. Plays a role in cell protection against oxidative stress by detoxifying peroxides. The chain is Peroxiredoxin 2 from Sulfurisphaera tokodaii (strain DSM 16993 / JCM 10545 / NBRC 100140 / 7) (Sulfolobus tokodaii).